We begin with the raw amino-acid sequence, 73 residues long: uncharacterized protein (73 aa).

The first 30 residues, 1–30, serve as a signal peptide directing secretion; that stretch reads MVDFYFIEEKVAYRAAFTTTGKIAATLGLA.

This is an uncharacterized protein from Archaeoglobus fulgidus (strain ATCC 49558 / DSM 4304 / JCM 9628 / NBRC 100126 / VC-16).